The chain runs to 445 residues: Argininosuccinate synthase (445 aa).

Residues 17–25 (AFSGGLDTS) and A43 contribute to the ATP site. Residue Y99 participates in L-citrulline binding. The ATP site is built by G129 and T131. L-aspartate-binding residues include T131, N135, and D136. Position 135 (N135) interacts with L-citrulline. Residue D136 coordinates ATP. R139 and S192 together coordinate L-citrulline. D194 is an ATP binding site. L-citrulline is bound by residues T201, E203, and E280.

This sequence belongs to the argininosuccinate synthase family. Type 2 subfamily. In terms of assembly, homotetramer.

The protein resides in the cytoplasm. It catalyses the reaction L-citrulline + L-aspartate + ATP = 2-(N(omega)-L-arginino)succinate + AMP + diphosphate + H(+). It participates in amino-acid biosynthesis; L-arginine biosynthesis; L-arginine from L-ornithine and carbamoyl phosphate: step 2/3. In Acidobacterium capsulatum (strain ATCC 51196 / DSM 11244 / BCRC 80197 / JCM 7670 / NBRC 15755 / NCIMB 13165 / 161), this protein is Argininosuccinate synthase.